An 864-amino-acid polypeptide reads, in one-letter code: DNA mismatch repair protein MutS (864 aa).

607–614 (GPNMGGKS) is an ATP binding site.

This sequence belongs to the DNA mismatch repair MutS family.

Functionally, this protein is involved in the repair of mismatches in DNA. It is possible that it carries out the mismatch recognition step. This protein has a weak ATPase activity. This is DNA mismatch repair protein MutS from Neisseria gonorrhoeae (strain NCCP11945).